Consider the following 152-residue polypeptide: Protein SprT-like (152 aa).

Positions 7–148 (QRLVEEVSLQ…GKCKGKLILI (142 aa)) constitute a SprT-like domain. Residue H67 coordinates Zn(2+). The active site involves E68. H71 provides a ligand contact to Zn(2+).

Belongs to the SprT family. Zn(2+) is required as a cofactor.

The protein localises to the cytoplasm. The polypeptide is Protein SprT-like (Bacillus cereus (strain AH187)).